The primary structure comprises 150 residues: Nucleoside diphosphate kinase (150 aa).

Residues K9, F57, R85, T91, R102, and N112 each coordinate ATP. Residue H115 is the Pros-phosphohistidine intermediate of the active site.

This sequence belongs to the NDK family. Homotetramer. Mg(2+) is required as a cofactor.

It is found in the cytoplasm. It carries out the reaction a 2'-deoxyribonucleoside 5'-diphosphate + ATP = a 2'-deoxyribonucleoside 5'-triphosphate + ADP. The catalysed reaction is a ribonucleoside 5'-diphosphate + ATP = a ribonucleoside 5'-triphosphate + ADP. Major role in the synthesis of nucleoside triphosphates other than ATP. The ATP gamma phosphate is transferred to the NDP beta phosphate via a ping-pong mechanism, using a phosphorylated active-site intermediate. The chain is Nucleoside diphosphate kinase from Symbiobacterium thermophilum (strain DSM 24528 / JCM 14929 / IAM 14863 / T).